The sequence spans 427 residues: Gamma-glutamyl phosphate reductase (427 aa).

This sequence belongs to the gamma-glutamyl phosphate reductase family.

It is found in the cytoplasm. It carries out the reaction L-glutamate 5-semialdehyde + phosphate + NADP(+) = L-glutamyl 5-phosphate + NADPH + H(+). It functions in the pathway amino-acid biosynthesis; L-proline biosynthesis; L-glutamate 5-semialdehyde from L-glutamate: step 2/2. Functionally, catalyzes the NADPH-dependent reduction of L-glutamate 5-phosphate into L-glutamate 5-semialdehyde and phosphate. The product spontaneously undergoes cyclization to form 1-pyrroline-5-carboxylate. The protein is Gamma-glutamyl phosphate reductase of Anaeromyxobacter dehalogenans (strain 2CP-1 / ATCC BAA-258).